Here is a 304-residue protein sequence, read N- to C-terminus: UDP-N-acetylenolpyruvoylglucosamine reductase (304 aa).

Residues 31-196 (RVGGPAERFY…VAAELELAPG (166 aa)) enclose the FAD-binding PCMH-type domain. Arg-176 is a catalytic residue. The active-site Proton donor is the Ser-225. Residue Glu-295 is part of the active site.

This sequence belongs to the MurB family. Requires FAD as cofactor.

The protein localises to the cytoplasm. It carries out the reaction UDP-N-acetyl-alpha-D-muramate + NADP(+) = UDP-N-acetyl-3-O-(1-carboxyvinyl)-alpha-D-glucosamine + NADPH + H(+). Its pathway is cell wall biogenesis; peptidoglycan biosynthesis. In terms of biological role, cell wall formation. In Methylococcus capsulatus (strain ATCC 33009 / NCIMB 11132 / Bath), this protein is UDP-N-acetylenolpyruvoylglucosamine reductase.